We begin with the raw amino-acid sequence, 333 residues long: Oxidoreductase AN1596 (333 aa).

The protein belongs to the NmrA-type oxidoreductase family.

The protein operates within secondary metabolite biosynthesis; terpenoid biosynthesis. In terms of biological role, oxidoreductase; part of the gene cluster that mediates the biosynthesis of the diterpene ent-pimara-8(14),15-diene (PD). Within the cluster, the HMG-CoA reductase AN1593 functions in the mevalonate pathway, which produces isoprenoid precursors. The geranylgeranyl pyrophosphate (GGPP) synthase AN1592 is needed in the formation of GGPP, the precursor for diterpenes. Lastly, the pimaradiene synthase pbcA performs the 2 cyclization steps that convert GGPP to ent-pimara-8(14),15-diene. The putative roles of the remaining cluster enzymes in ent-pimara-8(14),15-diene biosynthesis is unclear. The cytochrome P450 monooxygenase AN1598, the glutathione S-transferase AN1595, the oxidoreductases AN1596 and AN1597 probably function as decorative enzymes. It is possible that in biological conditions the compound is oxidized to ent-pimara-8(14),15-dien-19-oic acid, which is a bioactive diterpene compound predominant in many plant extracts. The sequence is that of Oxidoreductase AN1596 from Emericella nidulans (strain FGSC A4 / ATCC 38163 / CBS 112.46 / NRRL 194 / M139) (Aspergillus nidulans).